A 162-amino-acid chain; its full sequence is MYVELVDETGQVPSEIIEQTKEVLAFAAKKLNLKESTEMSVTFVDNARSHELNLQYRETDRPTDVISLEYKPDESEFFFDEDMELPEELLEEMDPFIGELFISIDKAAEQAADYGHSIEREYGWLAVHGFLHINGYDHYTPEEESEMFGLQEEILTAYGLTR.

Zn(2+)-binding residues include histidine 128, histidine 132, and histidine 138.

It belongs to the endoribonuclease YbeY family. Zn(2+) is required as a cofactor.

It is found in the cytoplasm. Single strand-specific metallo-endoribonuclease involved in late-stage 70S ribosome quality control and in maturation of the 3' terminus of the 16S rRNA. The polypeptide is Endoribonuclease YbeY (Lactococcus lactis subsp. lactis (strain IL1403) (Streptococcus lactis)).